Reading from the N-terminus, the 304-residue chain is GMP synthase [glutamine-hydrolyzing] subunit B (304 aa).

The GMPS ATP-PPase domain occupies 2-183 (VKVEKFIPNA…LDLPEEICER (182 aa)). Position 28-34 (28-34 (SGGVDSS)) interacts with ATP.

As to quaternary structure, heterodimer composed of a glutamine amidotransferase subunit (A) and a GMP-binding subunit (B).

The catalysed reaction is XMP + L-glutamine + ATP + H2O = GMP + L-glutamate + AMP + diphosphate + 2 H(+). Its pathway is purine metabolism; GMP biosynthesis; GMP from XMP (L-Gln route): step 1/1. In terms of biological role, catalyzes the synthesis of GMP from XMP. This Methanococcoides burtonii (strain DSM 6242 / NBRC 107633 / OCM 468 / ACE-M) protein is GMP synthase [glutamine-hydrolyzing] subunit B.